A 155-amino-acid polypeptide reads, in one-letter code: Probable tellurium resistance transcriptional regulator TerW (155 aa).

Involved in tellurite resistance. TerW binds specifically to the potential promoter region of the terZABCDE operon and probably regulates expression of the genes. This Escherichia coli protein is Probable tellurium resistance transcriptional regulator TerW.